We begin with the raw amino-acid sequence, 360 residues long: Phospho-N-acetylmuramoyl-pentapeptide-transferase (360 aa).

Helical transmembrane passes span 21-41 (YITVRAILTLLTALFISLWIG), 73-93 (TMGGVMILFSIGVSTLLWANL), 94-114 (ANPYIWVCLFVLFGYGAIGFV), 132-152 (WKYFWMSVVALVAILWLYWLG), 168-188 (IMPQLGLFYIVLSYFVIVGTG), 199-219 (GLAIMPTALVAGAFALIAWAT), 239-259 (VVVFCTAIVGASLGFLWFNTY), 263-283 (VFMGDVGSLALGGALGVVAIL), 288-308 (FLLVIMGGVFVVEALSVILQV), and 338-358 (VIIRFWIISLMLVLMGLVTLK).

Belongs to the glycosyltransferase 4 family. MraY subfamily. Mg(2+) serves as cofactor.

Its subcellular location is the cell inner membrane. It carries out the reaction UDP-N-acetyl-alpha-D-muramoyl-L-alanyl-gamma-D-glutamyl-meso-2,6-diaminopimeloyl-D-alanyl-D-alanine + di-trans,octa-cis-undecaprenyl phosphate = di-trans,octa-cis-undecaprenyl diphospho-N-acetyl-alpha-D-muramoyl-L-alanyl-D-glutamyl-meso-2,6-diaminopimeloyl-D-alanyl-D-alanine + UMP. It functions in the pathway cell wall biogenesis; peptidoglycan biosynthesis. In terms of biological role, catalyzes the initial step of the lipid cycle reactions in the biosynthesis of the cell wall peptidoglycan: transfers peptidoglycan precursor phospho-MurNAc-pentapeptide from UDP-MurNAc-pentapeptide onto the lipid carrier undecaprenyl phosphate, yielding undecaprenyl-pyrophosphoryl-MurNAc-pentapeptide, known as lipid I. The polypeptide is Phospho-N-acetylmuramoyl-pentapeptide-transferase (Haemophilus influenzae (strain PittEE)).